The sequence spans 398 residues: Nicotinate phosphoribosyltransferase 2 (398 aa).

Position 224 is a phosphohistidine; by autocatalysis (His-224).

Belongs to the NAPRTase family. In terms of processing, transiently phosphorylated on a His residue during the reaction cycle. Phosphorylation strongly increases the affinity for substrates and increases the rate of nicotinate D-ribonucleotide production. Dephosphorylation regenerates the low-affinity form of the enzyme, leading to product release.

It carries out the reaction nicotinate + 5-phospho-alpha-D-ribose 1-diphosphate + ATP + H2O = nicotinate beta-D-ribonucleotide + ADP + phosphate + diphosphate. It participates in cofactor biosynthesis; NAD(+) biosynthesis; nicotinate D-ribonucleotide from nicotinate: step 1/1. In terms of biological role, catalyzes the synthesis of beta-nicotinate D-ribonucleotide from nicotinate and 5-phospho-D-ribose 1-phosphate at the expense of ATP. The sequence is that of Nicotinate phosphoribosyltransferase 2 from Pseudomonas aeruginosa (strain ATCC 15692 / DSM 22644 / CIP 104116 / JCM 14847 / LMG 12228 / 1C / PRS 101 / PAO1).